A 347-amino-acid polypeptide reads, in one-letter code: Guanine nucleotide-binding protein alpha-6 subunit (347 aa).

One can recognise a G-alpha domain in the interval 30–347 (GITQVLLLGA…IIVGHVMDLV (318 aa)). A G1 motif region spans residues 33–46 (QVLLLGAGESGKST). Residues 38 to 45 (GAGESGKS), 172 to 178 (LRARVTT), 197 to 201 (DVGGQ), 266 to 269 (NKKD), and Ala322 each bind GTP. Positions 45 and 178 each coordinate Mg(2+). Residues 170–178 (DALRARVTT) form a G2 motif region. The G3 motif stretch occupies residues 193-202 (MKIIDVGGQR). The G4 motif stretch occupies residues 262–269 (ILFLNKKD). The G5 motif stretch occupies residues 320-325 (TIAVDT).

It belongs to the G-alpha family. G proteins are composed of 3 units; alpha, beta and gamma. The alpha chain contains the guanine nucleotide binding site.

Its function is as follows. Guanine nucleotide-binding proteins (G proteins) are involved as modulators or transducers in various transmembrane signaling systems. G alpha-6 is involved in the folic acid chemotaxis signal transduction pathway. The polypeptide is Guanine nucleotide-binding protein alpha-6 subunit (gpaF) (Dictyostelium discoideum (Social amoeba)).